A 376-amino-acid chain; its full sequence is Chaperone protein DnaJ (376 aa).

Residues 5 to 70 form the J domain; the sequence is DYYEILGVSK…QKRAAYDQYG (66 aa). The CR-type zinc finger occupies 131 to 209; that stretch reads GVTKEIRIPT…CHGHGRVERS (79 aa). Residues cysteine 144, cysteine 147, cysteine 161, cysteine 164, cysteine 183, cysteine 186, cysteine 197, and cysteine 200 each coordinate Zn(2+). CXXCXGXG motif repeat units lie at residues 144-151, 161-168, 183-190, and 197-204; these read CDVCHGSG, CPTCHGSG, CPHCQGRG, and CNKCHGHG.

It belongs to the DnaJ family. Homodimer. Requires Zn(2+) as cofactor.

The protein resides in the cytoplasm. Participates actively in the response to hyperosmotic and heat shock by preventing the aggregation of stress-denatured proteins and by disaggregating proteins, also in an autonomous, DnaK-independent fashion. Unfolded proteins bind initially to DnaJ; upon interaction with the DnaJ-bound protein, DnaK hydrolyzes its bound ATP, resulting in the formation of a stable complex. GrpE releases ADP from DnaK; ATP binding to DnaK triggers the release of the substrate protein, thus completing the reaction cycle. Several rounds of ATP-dependent interactions between DnaJ, DnaK and GrpE are required for fully efficient folding. Also involved, together with DnaK and GrpE, in the DNA replication of plasmids through activation of initiation proteins. This chain is Chaperone protein DnaJ, found in Shigella boydii serotype 18 (strain CDC 3083-94 / BS512).